Reading from the N-terminus, the 166-residue chain is NAD(P)H-quinone oxidoreductase subunit I, chloroplastic (166 aa).

4Fe-4S ferredoxin-type domains lie at 55 to 84 (GRIH…VDWK) and 95 to 124 (LNYS…MTEE). Positions 64, 67, 70, 74, 104, 107, 110, and 114 each coordinate [4Fe-4S] cluster.

It belongs to the complex I 23 kDa subunit family. NDH is composed of at least 16 different subunits, 5 of which are encoded in the nucleus. [4Fe-4S] cluster serves as cofactor.

Its subcellular location is the plastid. It localises to the chloroplast thylakoid membrane. The catalysed reaction is a plastoquinone + NADH + (n+1) H(+)(in) = a plastoquinol + NAD(+) + n H(+)(out). The enzyme catalyses a plastoquinone + NADPH + (n+1) H(+)(in) = a plastoquinol + NADP(+) + n H(+)(out). Its function is as follows. NDH shuttles electrons from NAD(P)H:plastoquinone, via FMN and iron-sulfur (Fe-S) centers, to quinones in the photosynthetic chain and possibly in a chloroplast respiratory chain. The immediate electron acceptor for the enzyme in this species is believed to be plastoquinone. Couples the redox reaction to proton translocation, and thus conserves the redox energy in a proton gradient. This Rensonia salvadorica protein is NAD(P)H-quinone oxidoreductase subunit I, chloroplastic.